The sequence spans 124 residues: Suppressor of RNA silencing (124 aa).

Residues 1–14 (MPKSEFFREERKRR) form a basic motif (BM) region. The interval 30–68 (CGYSCGMPPAVEKVSVPADTEEDVYMLIFPYEQFCGEKH) is C-2. Positions 72–124 (YESLKDVSDDELKLRRLERQRETLLASFQQKLKRYDEKIALLSEKFKNLRSKL) form a coiled coil. Phosphoserine is present on S79.

Belongs to the virgaviridae suppressor of RNA silencing family. As to quaternary structure, homooligomer. Phosphorylated at Ser-79 by a host PKA-like kinase; the phosphorylation at this site seems to suppress host cell death.

It localises to the host chloroplast envelope. Its subcellular location is the host endoplasmic reticulum. The protein localises to the host cell junction. The protein resides in the host plasmodesma. Functionally, suppressor of RNA-mediated gene silencing, also known as post-transcriptional gene silencing (PTGS), a mechanism of plant viral defense that limits the accumulation of viral RNAs. Promotes viral cell-to-cell long distance movement. This Peanut clump virus (isolate 87/TGTA2) (PCV) protein is Suppressor of RNA silencing.